Here is a 102-residue protein sequence, read N- to C-terminus: MICOS complex subunit MIC12 (102 aa).

The chain crosses the membrane as a helical span at residues 4–26; the sequence is VLKLTSVTLAASSLAAAGYFYAF.

It belongs to the MICOS complex subunit Mic12 family. Component of the mitochondrial contact site and cristae organizing system (MICOS) complex.

It is found in the mitochondrion inner membrane. Component of the MICOS complex, a large protein complex of the mitochondrial inner membrane that plays crucial roles in the maintenance of crista junctions, inner membrane architecture, and formation of contact sites to the outer membrane. The chain is MICOS complex subunit MIC12 (AIM5) from Lachancea thermotolerans (strain ATCC 56472 / CBS 6340 / NRRL Y-8284) (Yeast).